A 339-amino-acid polypeptide reads, in one-letter code: Terpene synthase 7 (339 aa).

The DDxx(x)D/E motif signature appears at 79–84 (DDFLES). The short motif at 219-227 (NDCASYAKE) is the NDxxSxxxD/E motif element.

It belongs to the terpene synthase family.

It carries out the reaction (2E,6E)-farnesyl diphosphate = (-)-beta-barbatene + diphosphate. Terpene synthase that converts its substrate farnesyl diphosphate (FPP) into the sesquiterpene beta-barbatene. The protein is Terpene synthase 7 of Dictyostelium discoideum (Social amoeba).